The chain runs to 409 residues: MEGESTSAVLSGFVLGALAFQHLNTDSDTEGFLLGEVKGEAKNSITDSQMDDVEVVYTIDIQKYIPCYQLFSFYNSSGEVNEQALKKILSNVKKNVVGWYKFRRHSDQIMTFRERLLHKNLQEHFSNQDLVFLLLTPSIITESCSTHRLEHSLYKPQKGLFHRVPLVVANLGMSEQLGYKTVSGSCMSTGFSRAVQTHSSKFFEEDGSLKEVHKINEMYASLQEELKSICKKVEDSEQAVDKLVKDVNRLKREIEKRRGAQIQAAREKNIQKDPQENIFLCQALRTFFPNSEFLHSCVMSLKNRHVSKSSCNYNHHLDVVDNLTLMVEHTDIPEASPASTPQIIKHKALDLDDRWQFKRSRLLDTQDKRSKADTGSSNQDKASKMSSPETDEEIEKMKGFGEYSRSPTF.

The region spanning Ser-7 to Leu-160 is the MPN domain. Ser-48 is modified (phosphoserine). Positions Asp-206–Ala-260 form a coiled coil. Positions Leu-362 to Ala-372 are enriched in basic and acidic residues. A disordered region spans residues Leu-362–Phe-409. Over residues Asp-373–Pro-388 the composition is skewed to polar residues. 2 positions are modified to phosphoserine: Ser-386 and Ser-387. Phosphothreonine is present on Thr-390. A phosphoserine mark is found at Ser-404 and Ser-406. Residues Ser-406 to Phe-409 carry the pSXXF motif motif.

The protein belongs to the FAM175 family. Abraxas subfamily. In terms of assembly, component of the ARISC complex, at least composed of UIMC1/RAP80, ABRAXAS1, BRCC3/BRCC36, BABAM2 and BABAM1/NBA1. Component of the BRCA1-A complex, at least composed of BRCA1, BARD1, UIMC1/RAP80, ABRAXAS1, BRCC3/BRCC36, BABAM2 and BABAM1/NBA1. In the complex, interacts directly with UIMC1/RAP80, BRCC3/BRCC36 and BABAM2. Interacts directly (when phosphorylated at Ser-406) with BRCA1. Homodimer. The homodimer interacts directly (when phosphorylated at Ser-404 and Ser-406) with two BRCA1 chains, giving rise to a heterotetramer. Binds polyubiquitin. Post-translationally, phosphorylation of Ser-406 of the pSXXF motif by ATM or ATR constitutes a specific recognition motif for the BRCT domain of BRCA1. Ionizing radiation promotes rapid phosphorylation at Ser-404 and Ser-406 by ATM; this promotes recruitment of BRCA1 to sites of DNA damage.

It is found in the nucleus. Functionally, involved in DNA damage response and double-strand break (DSB) repair. Component of the BRCA1-A complex, acting as a central scaffold protein that assembles the various components of the complex and mediates the recruitment of BRCA1. The BRCA1-A complex specifically recognizes 'Lys-63'-linked ubiquitinated histones H2A and H2AX at DNA lesion sites, leading to target the BRCA1-BARD1 heterodimer to sites of DNA damage at DSBs. This complex also possesses deubiquitinase activity that specifically removes 'Lys-63'-linked ubiquitin on histones H2A and H2AX. This Homo sapiens (Human) protein is BRCA1-A complex subunit Abraxas 1.